We begin with the raw amino-acid sequence, 177 residues long: MSRIGKRPISIPSGVTATVEGQLVKAKGPKGELSYVVNDEVLVKFEENVISVMPRDQSKDARSKWGMSRSMIENIFCGVKDGFEKRLEINGVGYRAALQGKDIQLSLGFSHDVVYKVPSGVTVTVPKPTEIVISGIDKQQVGQVAAEIREYRRPEPYKGKGVKHADERIFRKEGKKK.

The interval 155-177 is disordered; the sequence is EPYKGKGVKHADERIFRKEGKKK.

This sequence belongs to the universal ribosomal protein uL6 family. In terms of assembly, part of the 50S ribosomal subunit.

In terms of biological role, this protein binds to the 23S rRNA, and is important in its secondary structure. It is located near the subunit interface in the base of the L7/L12 stalk, and near the tRNA binding site of the peptidyltransferase center. The sequence is that of Large ribosomal subunit protein uL6 from Bartonella tribocorum (strain CIP 105476 / IBS 506).